The chain runs to 224 residues: MAMQRRRLGRVDYATTFDAMRAFTETRTPGTPDELWLCEHPPVFTQGLAGKAEHVLDAGDIPVVASNRGGQVTYHGPGQVVAYPLIDLQALGIFVKEYVFRLEQAVIKTLEGYGVTGHRVTGAPGIYVNLCDPFGHGALPGPPDPRDPWRGIGKIAALGIKVSRHCSYHGLALNVAMDLSPYERINPCGYAGLRTVDLSTIGVPVDPERAAADLGDRLESYLSP.

The BPL/LPL catalytic domain occupies 29–224; it reads PGTPDELWLC…GDRLESYLSP (196 aa). Substrate contacts are provided by residues 68-75, 157-159, and 170-172; these read RGGQVTYH, ALG, and GLA. Residue cysteine 188 is the Acyl-thioester intermediate of the active site.

Belongs to the LipB family.

It is found in the cytoplasm. It catalyses the reaction octanoyl-[ACP] + L-lysyl-[protein] = N(6)-octanoyl-L-lysyl-[protein] + holo-[ACP] + H(+). It functions in the pathway protein modification; protein lipoylation via endogenous pathway; protein N(6)-(lipoyl)lysine from octanoyl-[acyl-carrier-protein]: step 1/2. Its function is as follows. Catalyzes the transfer of endogenously produced octanoic acid from octanoyl-acyl-carrier-protein onto the lipoyl domains of lipoate-dependent enzymes. Lipoyl-ACP can also act as a substrate although octanoyl-ACP is likely to be the physiological substrate. The sequence is that of Octanoyltransferase from Methylibium petroleiphilum (strain ATCC BAA-1232 / LMG 22953 / PM1).